The chain runs to 393 residues: Lipid-A-disaccharide synthase (393 aa).

Belongs to the LpxB family.

It catalyses the reaction a lipid X + a UDP-2-N,3-O-bis[(3R)-3-hydroxyacyl]-alpha-D-glucosamine = a lipid A disaccharide + UDP + H(+). It functions in the pathway bacterial outer membrane biogenesis; LPS lipid A biosynthesis. In terms of biological role, condensation of UDP-2,3-diacylglucosamine and 2,3-diacylglucosamine-1-phosphate to form lipid A disaccharide, a precursor of lipid A, a phosphorylated glycolipid that anchors the lipopolysaccharide to the outer membrane of the cell. The polypeptide is Lipid-A-disaccharide synthase (Actinobacillus pleuropneumoniae serotype 5b (strain L20)).